Here is a 119-residue protein sequence, read N- to C-terminus: Ribonuclease P protein component (119 aa).

The protein belongs to the RnpA family. In terms of assembly, consists of a catalytic RNA component (M1 or rnpB) and a protein subunit.

It carries out the reaction Endonucleolytic cleavage of RNA, removing 5'-extranucleotides from tRNA precursor.. Functionally, RNaseP catalyzes the removal of the 5'-leader sequence from pre-tRNA to produce the mature 5'-terminus. It can also cleave other RNA substrates such as 4.5S RNA. The protein component plays an auxiliary but essential role in vivo by binding to the 5'-leader sequence and broadening the substrate specificity of the ribozyme. This Escherichia fergusonii (strain ATCC 35469 / DSM 13698 / CCUG 18766 / IAM 14443 / JCM 21226 / LMG 7866 / NBRC 102419 / NCTC 12128 / CDC 0568-73) protein is Ribonuclease P protein component.